Consider the following 221-residue polypeptide: Serine/arginine-rich splicing factor 9 (221 aa).

2 consecutive RRM domains span residues 14 to 89 (GRIY…FPRA) and 111 to 187 (FRVL…PERG). Residue Lys36 forms a Glycyl lysine isopeptide (Lys-Gly) (interchain with G-Cter in SUMO2) linkage. The segment covering 187 to 198 (GTSYGCSRSRSG) has biased composition (low complexity). Residues 187–221 (GTSYGCSRSRSGSRGRDSPYQSRGSPHYFSPFRPY) are disordered. Residues 188-200 (TSYGCSRSRSGSR) form an interaction with SAFB1 region. Ser189, Ser193, Ser195, Ser204, Ser208, and Ser211 each carry phosphoserine. Tyr214 bears the Phosphotyrosine mark. Residue Ser216 is modified to Phosphoserine.

It belongs to the splicing factor SR family. Interacts with KHDRBS3. Interacts with HABP4. Interacts with NOL3/ARC/NOP30. Interacts with NSEP1/YB-1/YB1. Interacts with SAFB/SAFB1. Interacts with SRSF6/SFRS6. Interacts with TRA2B/SFRS10. Interacts with C1QBP. May also interact with DUSP11/PIR1. In terms of processing, extensively phosphorylated on serine residues in the RS domain.

The protein localises to the nucleus. In terms of biological role, plays a role in constitutive splicing and can modulate the selection of alternative splice sites. Represses the splicing of MAPT/Tau exon 10. The protein is Serine/arginine-rich splicing factor 9 (Srsf9) of Rattus norvegicus (Rat).